The chain runs to 154 residues: uncharacterized protein (154 aa).

It localises to the mitochondrion. This is an uncharacterized protein from Arabidopsis thaliana (Mouse-ear cress).